The primary structure comprises 430 residues: Adenylosuccinate synthetase (430 aa).

GTP-binding positions include 13–19 and 41–43; these read GDEGKGK and GHT. Aspartate 14 acts as the Proton acceptor in catalysis. Residues aspartate 14 and glycine 41 each coordinate Mg(2+). Residues 14-17, 39-42, threonine 130, arginine 144, glutamine 225, threonine 240, and arginine 304 contribute to the IMP site; these read DEGK and NAGH. Residue histidine 42 is the Proton donor of the active site. 300-306 contributes to the substrate binding site; the sequence is ATTGRAR. GTP is bound by residues arginine 306, 332–334, and 414–416; these read KLD and STG.

This sequence belongs to the adenylosuccinate synthetase family. In terms of assembly, homodimer. Requires Mg(2+) as cofactor.

It is found in the cytoplasm. The catalysed reaction is IMP + L-aspartate + GTP = N(6)-(1,2-dicarboxyethyl)-AMP + GDP + phosphate + 2 H(+). It participates in purine metabolism; AMP biosynthesis via de novo pathway; AMP from IMP: step 1/2. Functionally, plays an important role in the de novo pathway of purine nucleotide biosynthesis. Catalyzes the first committed step in the biosynthesis of AMP from IMP. The sequence is that of Adenylosuccinate synthetase from Pseudomonas syringae pv. syringae (strain B728a).